The following is a 204-amino-acid chain: Phosphoribosyl-dephospho-CoA transferase (204 aa).

Active-site residues include Asp-129 and Asp-131.

It belongs to the MdcG family.

The enzyme catalyses apo-[malonate decarboxylase ACP] + 2'-(5''-triphospho-alpha-D-ribosyl)-3'-dephospho-CoA = holo-[malonate decarboxylase ACP] + diphosphate. Transfers 2'-(5-triphosphoribosyl)-3'-dephosphocoenzyme-A to the apo-[acyl-carrier-protein] of the malonate decarboxylase to yield holo-[acyl-carrier-protein]. In Pseudomonas putida (Arthrobacter siderocapsulatus), this protein is Phosphoribosyl-dephospho-CoA transferase.